We begin with the raw amino-acid sequence, 315 residues long: Protein sprouty homolog 2 (315 aa).

Polar residues predominate over residues 1–15; that stretch reads MEARAQSGNGSQPLL. A disordered region spans residues 1–140; it reads MEARAQSGNG…SEQRLLGSSF (140 aa). Over residues 20-32 the composition is skewed to basic and acidic residues; the sequence is DGGRPRGEPDPRD. Residues 108-140 show a composition bias toward low complexity; sequence SRSISTVSSGSRSSTRTSTSSSSSEQRLLGSSF. Residues 118–315 are required for interaction with CAV1; the sequence is SRSSTRTSTS…VPRRNFEKPT (198 aa). One can recognise an SPR domain in the interval 177-291; the sequence is RCEDCGKCKC…CYDRVNRPGC (115 aa). A required for interaction with TESK1 region spans residues 178-315; that stretch reads CEDCGKCKCK…VPRRNFEKPT (138 aa).

The protein belongs to the sprouty family. As to quaternary structure, forms heterodimers with SPRY1. Forms a tripartite complex containing GAB1, METTL13 and SPRY2. Within the complex interacts with METTL13. Interacts with RAF1. Interacts (via C-terminus) with TESK1 (via C-terminus); the interaction disrupts SPRY2 interaction with GRB2, potentially via disruption of SPRY2 serine dephosphorylation. Interacts with PPP2R1A/PP2A-A and PPP2CA/PP2A-C; the interaction with PPP2CA/PP2A-C is inhibited by interaction with TESK1, possibly by vesicular sequestration of SPRY2. Inhibition of the interaction with the serine/threonine-protein phosphatase 2A (PP2A) holoenzyme results in loss of PP2A-mediated dephosphorylation, resulting in the loss of SPRY2 interaction with GRB2. Interacts with GRB2. Interacts with CBL/C-CBL; the interaction inhibits CBL-mediated ubiquitination of EGFR. Interacts (via C-terminus) with CAV1 (via C-terminus). Post-translationally, cleaved at Pro-144 by the prolyl endopeptidase FAP (seprase) activity (in vitro).

The protein resides in the cytoplasm. Its subcellular location is the cytoskeleton. The protein localises to the cell projection. It is found in the ruffle membrane. Its function is as follows. Antagonist of fibroblast growth factor (FGF) pathways via inhibition of FGF-mediated phosphorylation of ERK1/2. Thereby acts as an antagonist of FGF-induced retinal lens fiber differentiation, may inhibit limb bud outgrowth and may negatively modulate respiratory organogenesis. Inhibits TGFB-induced epithelial-to-mesenchymal transition in retinal lens epithelial cells. Inhibits CBL/C-CBL-mediated EGFR ubiquitination. The polypeptide is Protein sprouty homolog 2 (SPRY2) (Pongo abelii (Sumatran orangutan)).